Consider the following 408-residue polypeptide: Adenylosuccinate synthetase (408 aa).

GTP contacts are provided by residues 12–18 and 40–42; these read GDEGKGK and GHT. Asp-13 (proton acceptor) is an active-site residue. Residues Asp-13 and Gly-40 each coordinate Mg(2+). IMP-binding positions include 13–16, 38–41, Thr-121, Arg-135, Gln-213, Thr-228, and Arg-292; these read DEGK and NAGH. Catalysis depends on His-41, which acts as the Proton donor. 288-294 contributes to the substrate binding site; that stretch reads TTTGRPR. GTP is bound by residues Arg-294, 320 to 322, and 393 to 395; these read KLD and STS.

The protein belongs to the adenylosuccinate synthetase family. In terms of assembly, homodimer. It depends on Mg(2+) as a cofactor.

Its subcellular location is the cytoplasm. The enzyme catalyses IMP + L-aspartate + GTP = N(6)-(1,2-dicarboxyethyl)-AMP + GDP + phosphate + 2 H(+). It functions in the pathway purine metabolism; AMP biosynthesis via de novo pathway; AMP from IMP: step 1/2. Plays an important role in the de novo pathway of purine nucleotide biosynthesis. Catalyzes the first committed step in the biosynthesis of AMP from IMP. This chain is Adenylosuccinate synthetase, found in Thermus thermophilus (strain ATCC BAA-163 / DSM 7039 / HB27).